The chain runs to 100 residues: Small ribosomal subunit protein uS14c (100 aa).

The protein belongs to the universal ribosomal protein uS14 family. Part of the 30S ribosomal subunit.

It localises to the plastid. The protein resides in the chloroplast. Functionally, binds 16S rRNA, required for the assembly of 30S particles. The polypeptide is Small ribosomal subunit protein uS14c (Gracilaria tenuistipitata var. liui (Red alga)).